The chain runs to 295 residues: Glycine--tRNA ligase alpha subunit (295 aa).

This sequence belongs to the class-II aminoacyl-tRNA synthetase family. Tetramer of two alpha and two beta subunits.

The protein localises to the cytoplasm. It catalyses the reaction tRNA(Gly) + glycine + ATP = glycyl-tRNA(Gly) + AMP + diphosphate. In Bacillus subtilis (strain 168), this protein is Glycine--tRNA ligase alpha subunit (glyQ).